The sequence spans 1430 residues: rRNA biogenesis protein RRP5 (1430 aa).

6 S1 motif domains span residues 74 to 160 (DMLV…LSLK), 176 to 238 (GFIF…CTCV), 261 to 329 (GSIV…LTLN), 447 to 511 (GDLV…VSNR), 531 to 592 (GNVY…LTLP), and 697 to 771 (QVGD…VSAK). Residues 1041–1145 (KITNGQKKTQ…AKEKAKAEIK (105 aa)) are disordered. Residues 1043–1053 (TNGQKKTQPLT) are compositionally biased toward polar residues. Composition is skewed to basic and acidic residues over residues 1057-1082 (VKEKPKQNGKLFFEDKTPAKNAKSET) and 1135-1145 (SAKEKAKAEIK). The stretch at 1119 to 1157 (LNVAETQKNAAKKKRLSAKEKAKAEIKEEQRLREIEERN) forms a coiled coil. 6 HAT repeats span residues 1161 to 1193 (KARLETIDQYERLVIAQPNNSISWLKYIAFLLS), 1195 to 1232 (TEIEKARALARRAISTISFRETQELRNMWSALLNMELV), 1265 to 1297 (KRKDRLSSVLTTVLNKFKTELRVWPVAAEAYFW), 1299 to 1333 (GKSDQVHNLLQRALRALPNQEHIPCIVSFAKLYAK), 1335 to 1367 (DNNDMAQTLLDDVVTSYPKRIDIWSVYVDMLIK), and 1369 to 1404 (GLIDSARNVLERAVVQKLKPNKMQVIYKKYLQLEEN).

It is found in the nucleus. The protein resides in the nucleolus. In terms of biological role, involved in rRNA processing or maturation during ribosome biogenesis. This chain is rRNA biogenesis protein RRP5, found in Drosophila melanogaster (Fruit fly).